The sequence spans 274 residues: Glutamate racemase (274 aa).

Substrate is bound by residues 10-11 (DS) and 42-43 (YG). Catalysis depends on cysteine 73, which acts as the Proton donor/acceptor. 74 to 75 (NT) provides a ligand contact to substrate. The active-site Proton donor/acceptor is the cysteine 184. 185-186 (TH) contributes to the substrate binding site.

The protein belongs to the aspartate/glutamate racemases family.

It carries out the reaction L-glutamate = D-glutamate. It participates in cell wall biogenesis; peptidoglycan biosynthesis. Provides the (R)-glutamate required for cell wall biosynthesis. The polypeptide is Glutamate racemase (Latilactobacillus sakei subsp. sakei (strain 23K) (Lactobacillus sakei subsp. sakei)).